Here is a 118-residue protein sequence, read N- to C-terminus: Peptidyl-tRNA hydrolase (118 aa).

It belongs to the PTH2 family.

It localises to the cytoplasm. It catalyses the reaction an N-acyl-L-alpha-aminoacyl-tRNA + H2O = an N-acyl-L-amino acid + a tRNA + H(+). In terms of biological role, the natural substrate for this enzyme may be peptidyl-tRNAs which drop off the ribosome during protein synthesis. This Thermococcus onnurineus (strain NA1) protein is Peptidyl-tRNA hydrolase.